The following is a 370-amino-acid chain: Immunoglobulin superfamily member 5 (370 aa).

Positions 1–24 (MEGSWRDVLAVLVILAQLTASGSS) are cleaved as a signal peptide. 2 Ig-like V-type domains span residues 25–125 (YQII…LSVQ) and 128–215 (GTLN…KSLT). Topologically, residues 25–239 (YQIIEGPQNV…EEGPALPTWA (215 aa)) are extracellular. 2 N-linked (GlcNAc...) asparagine glycosylation sites follow: Asn-33 and Asn-45. A disulfide bridge links Cys-46 with Cys-109. 3 N-linked (GlcNAc...) asparagine glycosylation sites follow: Asn-146, Asn-196, and Asn-217. Cys-149 and Cys-201 form a disulfide bridge. Residues 240-260 (IILLAVAFSLLLILIIVLIII) form a helical membrane-spanning segment. Residues 261-370 (FCCCCASRRE…PQKVRNVTLV (110 aa)) lie on the Cytoplasmic side of the membrane. The segment at 284-359 (ANMRTNKADP…THPRVSFDIA (76 aa)) is disordered. Over residues 289-301 (NKADPETKLKGGK) the composition is skewed to basic and acidic residues.

This sequence belongs to the immunoglobulin superfamily. As to quaternary structure, interacts with MAGI1 at tight junctions, forms a tripartite complex with NPHS1. Interacts with LNX1 isoform 2 via its PDZ 2 domain, it may also interact with other isoforms containing this domain. In terms of processing, N-glycosylated. Localized to kidney glomeruli and small intestinal epithelial cells. In kidney glomeruli, it is localized at slit diaphragm. Also found in spermatogonia, gonocytes, hematopoietic stem cells and Sertoli cells.

It is found in the apical cell membrane. It localises to the cell junction. The protein localises to the tight junction. Functionally, provides, together with MAGI1, an adhesion machinery at tight junctions, which may regulate the permeability of kidney glomerulus and small intestinal epithelial cells. Mediates calcium-independent homophilic cell adhesion. In testis, it may function as a cell adhesion molecule rather than a tight-junction protein. It may participate in the adhesion between spermatogonia-spermatogonia, spermatogonia-Sertoli cells, and Sertoli cells-Sertoli cells. This chain is Immunoglobulin superfamily member 5 (Igsf5), found in Mus musculus (Mouse).